The following is a 120-amino-acid chain: Glycine cleavage system H protein (120 aa).

One can recognise a Lipoyl-binding domain in the interval 19–101; sequence DGTVGITDHA…YEGGWLFKLE (83 aa). Lys-60 is modified (N6-lipoyllysine).

It belongs to the GcvH family. In terms of assembly, the glycine cleavage system is composed of four proteins: P, T, L and H. (R)-lipoate is required as a cofactor.

Functionally, the glycine cleavage system catalyzes the degradation of glycine. The H protein shuttles the methylamine group of glycine from the P protein to the T protein. This Deinococcus deserti (strain DSM 17065 / CIP 109153 / LMG 22923 / VCD115) protein is Glycine cleavage system H protein.